Reading from the N-terminus, the 168-residue chain is Protein GRIM REAPER (168 aa).

The N-terminal stretch at 1 to 30 (MVIKIPNTFIKATSLLSLILYFLIIATSKS) is a signal peptide. Residue Asn59 is glycosylated (N-linked (GlcNAc...) asparagine).

The protein belongs to the STIG1 family. In terms of assembly, interacts with PRK5 and to a lower extent with PRK4. In terms of tissue distribution, highly expressed in flowers, and at very low levels in leaves.

Its subcellular location is the secreted. It is found in the extracellular space. The protein resides in the apoplast. In terms of biological role, involved in the regulation of cell death induced by extracellular reactive oxygen species. Only the processed peptide, and not the full length GRI can bind in vivo to the extracellular domain of the receptor PRK5. The GRIp-induced cell death is superoxide and salicylic acid dependent. The chain is Protein GRIM REAPER from Arabidopsis thaliana (Mouse-ear cress).